Here is a 220-residue protein sequence, read N- to C-terminus: Dual specificity phosphatase 29 (220 aa).

A compositionally biased stretch (polar residues) spans 1 to 15 (MTSGEVKTSLKNAYS). Positions 1-29 (MTSGEVKTSLKNAYSSAKRLSPKMEEEGE) are disordered. A Tyrosine-protein phosphatase domain is found at 54-202 (HVNEVWPKLY…LRELDKQLVQ (149 aa)). 146 to 153 (HCVMGRSR) lines the substrate pocket. Cys-147 serves as the catalytic Phosphocysteine intermediate.

The protein belongs to the protein-tyrosine phosphatase family. Non-receptor class dual specificity subfamily. In terms of assembly, homodimer. Interacts with PRKAA2.

The protein localises to the cytoplasm. The protein resides in the nucleus. The enzyme catalyses O-phospho-L-tyrosyl-[protein] + H2O = L-tyrosyl-[protein] + phosphate. The catalysed reaction is O-phospho-L-seryl-[protein] + H2O = L-seryl-[protein] + phosphate. It catalyses the reaction O-phospho-L-threonyl-[protein] + H2O = L-threonyl-[protein] + phosphate. Dual specificity phosphatase able to dephosphorylate phosphotyrosine, phosphoserine and phosphothreonine residues within the same substrate, with a preference for phosphotyrosine as a substrate. Involved in the modulation of intracellular signaling cascades. In skeletal muscle regulates systemic glucose homeostasis by activating, AMPK, an energy sensor protein kinase. Affects MAP kinase signaling though modulation of the MAPK1/2 cascade in skeletal muscle promoting muscle cell differentiation, development and atrophy. In Homo sapiens (Human), this protein is Dual specificity phosphatase 29.